Consider the following 338-residue polypeptide: Adenylosuccinate synthetase (338 aa).

GTP-binding positions include 12–18 and 42–44; these read GDEGKGK and GHT. Catalysis depends on Asp-13, which acts as the Proton acceptor. Residues Asp-13 and Gly-42 each contribute to the Mg(2+) site. Residues 13–16, 40–43, Thr-127, Arg-141, Gln-179, Thr-194, and Arg-256 each bind IMP; these read DEGK and NAGH. Catalysis depends on His-43, which acts as the Proton donor. Residue 252 to 258 participates in substrate binding; the sequence is TVTGRRR. Residues Arg-258, 284 to 286, and 324 to 326 each bind GTP; these read CLD and STG.

It belongs to the adenylosuccinate synthetase family. As to quaternary structure, homodimer. The cofactor is Mg(2+).

It localises to the cytoplasm. The enzyme catalyses IMP + L-aspartate + GTP = N(6)-(1,2-dicarboxyethyl)-AMP + GDP + phosphate + 2 H(+). The protein operates within purine metabolism; AMP biosynthesis via de novo pathway; AMP from IMP: step 1/2. Plays an important role in the de novo pathway of purine nucleotide biosynthesis. Catalyzes the first committed step in the biosynthesis of AMP from IMP. In Methanococcus vannielii (strain ATCC 35089 / DSM 1224 / JCM 13029 / OCM 148 / SB), this protein is Adenylosuccinate synthetase.